Here is a 98-residue protein sequence, read N- to C-terminus: Integration host factor subunit alpha (98 aa).

It belongs to the bacterial histone-like protein family. As to quaternary structure, heterodimer of an alpha and a beta chain.

Its function is as follows. This protein is one of the two subunits of integration host factor, a specific DNA-binding protein that functions in genetic recombination as well as in transcriptional and translational control. The chain is Integration host factor subunit alpha from Glaesserella parasuis serovar 5 (strain SH0165) (Haemophilus parasuis).